The chain runs to 114 residues: Iron-sulfur cluster insertion protein ErpA (114 aa).

Iron-sulfur cluster is bound by residues cysteine 42, cysteine 106, and cysteine 108.

The protein belongs to the HesB/IscA family. Homodimer. The cofactor is iron-sulfur cluster.

Functionally, required for insertion of 4Fe-4S clusters for at least IspG. The sequence is that of Iron-sulfur cluster insertion protein ErpA from Buchnera aphidicola subsp. Acyrthosiphon pisum (strain 5A).